We begin with the raw amino-acid sequence, 241 residues long: ATP synthase subunit a (241 aa).

The next 7 membrane-spanning stretches (helical) occupy residues 27–47 (NCSLVMVLASVSSILLLCWAL), 52–72 (VVPGPSQTAVELIYGFVANTL), 87–107 (VMTTFLFVLACNLVGILPFGF), 112–132 (HLSVTLALSLVVCTAITVIGF), 142–162 (IFLPEGTPLWLAPMMVFIKLF), 175–195 (LAANMIAGHTIIAVIADFVLK), and 198–218 (LVLAPLPFAFIMGLIAFEIFV).

This sequence belongs to the ATPase A chain family. In terms of assembly, F-type ATPases have 2 components, CF(1) - the catalytic core - and CF(0) - the membrane proton channel. CF(1) has five subunits: alpha(3), beta(3), gamma(1), delta(1), epsilon(1). CF(0) has three main subunits: a(1), b(2) and c(9-12). The alpha and beta chains form an alternating ring which encloses part of the gamma chain. CF(1) is attached to CF(0) by a central stalk formed by the gamma and epsilon chains, while a peripheral stalk is formed by the delta and b chains.

It localises to the cell inner membrane. Functionally, key component of the proton channel; it plays a direct role in the translocation of protons across the membrane. The protein is ATP synthase subunit a of Anaplasma marginale (strain St. Maries).